Reading from the N-terminus, the 267-residue chain is Glutamate racemase (267 aa).

Residues 10-11 and 42-43 each bind substrate; these read DS and YG. Cysteine 73 (proton donor/acceptor) is an active-site residue. 74-75 contributes to the substrate binding site; it reads NT. Cysteine 183 (proton donor/acceptor) is an active-site residue. 184–185 contributes to the substrate binding site; the sequence is TH.

This sequence belongs to the aspartate/glutamate racemases family.

The catalysed reaction is L-glutamate = D-glutamate. It functions in the pathway cell wall biogenesis; peptidoglycan biosynthesis. Provides the (R)-glutamate required for cell wall biosynthesis. This is Glutamate racemase from Limosilactobacillus reuteri (strain DSM 20016) (Lactobacillus reuteri).